We begin with the raw amino-acid sequence, 111 residues long: Large ribosomal subunit protein uL23 (111 aa).

This sequence belongs to the universal ribosomal protein uL23 family. In terms of assembly, part of the 50S ribosomal subunit. Contacts protein L29, and trigger factor when it is bound to the ribosome.

One of the early assembly proteins it binds 23S rRNA. One of the proteins that surrounds the polypeptide exit tunnel on the outside of the ribosome. Forms the main docking site for trigger factor binding to the ribosome. This chain is Large ribosomal subunit protein uL23, found in Chlamydia abortus (strain DSM 27085 / S26/3) (Chlamydophila abortus).